A 212-amino-acid chain; its full sequence is Large ribosomal subunit protein uL3 (212 aa).

Residue Gln152 is modified to N5-methylglutamine.

The protein belongs to the universal ribosomal protein uL3 family. Part of the 50S ribosomal subunit. Forms a cluster with proteins L14 and L19. Methylated by PrmB.

Its function is as follows. One of the primary rRNA binding proteins, it binds directly near the 3'-end of the 23S rRNA, where it nucleates assembly of the 50S subunit. This chain is Large ribosomal subunit protein uL3, found in Chromohalobacter salexigens (strain ATCC BAA-138 / DSM 3043 / CIP 106854 / NCIMB 13768 / 1H11).